The sequence spans 590 residues: Aspartate--tRNA(Asp/Asn) ligase (590 aa).

L-aspartate is bound at residue glutamate 173. An aspartate region spans residues 197–200 (QIFK). Arginine 219 is an L-aspartate binding site. ATP-binding positions include 219-221 (RDE) and glutamine 228. L-aspartate is bound at residue histidine 450. ATP is bound at residue glutamate 484. Arginine 491 contributes to the L-aspartate binding site. Residue 536-539 (GLDR) coordinates ATP.

It belongs to the class-II aminoacyl-tRNA synthetase family. Type 1 subfamily. In terms of assembly, homodimer.

The protein localises to the cytoplasm. The enzyme catalyses tRNA(Asx) + L-aspartate + ATP = L-aspartyl-tRNA(Asx) + AMP + diphosphate. In terms of biological role, aspartyl-tRNA synthetase with relaxed tRNA specificity since it is able to aspartylate not only its cognate tRNA(Asp) but also tRNA(Asn). Reaction proceeds in two steps: L-aspartate is first activated by ATP to form Asp-AMP and then transferred to the acceptor end of tRNA(Asp/Asn). This Coxiella burnetii (strain RSA 493 / Nine Mile phase I) protein is Aspartate--tRNA(Asp/Asn) ligase.